The primary structure comprises 160 residues: Probable nucleoside diphosphate kinase DDB_G0292928 (160 aa).

K12, F61, R103, T109, R122, and N132 together coordinate ATP. H135 serves as the catalytic Pros-phosphohistidine intermediate.

Belongs to the NDK family. Mg(2+) serves as cofactor.

The catalysed reaction is a 2'-deoxyribonucleoside 5'-diphosphate + ATP = a 2'-deoxyribonucleoside 5'-triphosphate + ADP. The enzyme catalyses a ribonucleoside 5'-diphosphate + ATP = a ribonucleoside 5'-triphosphate + ADP. The protein is Probable nucleoside diphosphate kinase DDB_G0292928 of Dictyostelium discoideum (Social amoeba).